The following is a 372-amino-acid chain: Chaperone protein DnaJ (372 aa).

One can recognise a J domain in the interval 5 to 70 (DYYELLEISR…EKKSIYDRYG (66 aa)). The CR-type zinc-finger motif lies at 134 to 211 (GCNKEINYKY…CKGTGYEEVK (78 aa)). Residues Cys147, Cys150, Cys163, Cys166, Cys185, Cys188, Cys199, and Cys202 each contribute to the Zn(2+) site. CXXCXGXG motif repeat units follow at residues 147–154 (CKPCEGTG), 163–170 (CPTCKGQG), 185–192 (CPRCGGTG), and 199–206 (CKSCKGTG).

Belongs to the DnaJ family. In terms of assembly, homodimer. It depends on Zn(2+) as a cofactor.

The protein resides in the cytoplasm. Functionally, participates actively in the response to hyperosmotic and heat shock by preventing the aggregation of stress-denatured proteins and by disaggregating proteins, also in an autonomous, DnaK-independent fashion. Unfolded proteins bind initially to DnaJ; upon interaction with the DnaJ-bound protein, DnaK hydrolyzes its bound ATP, resulting in the formation of a stable complex. GrpE releases ADP from DnaK; ATP binding to DnaK triggers the release of the substrate protein, thus completing the reaction cycle. Several rounds of ATP-dependent interactions between DnaJ, DnaK and GrpE are required for fully efficient folding. Also involved, together with DnaK and GrpE, in the DNA replication of plasmids through activation of initiation proteins. The protein is Chaperone protein DnaJ of Aliarcobacter butzleri (strain RM4018) (Arcobacter butzleri).